A 258-amino-acid chain; its full sequence is MKITKIEKKKRLYTLELDNTENLYITEDTIVHFMLSKGMIVNAEKLENIKKFAQLSYGKNLGLYYISFKQRTEKELIKYLQQHDIDSKIIPQIIDNLKSENWINDKNYVQSFIQQNLNTGDKGPYVIKQKLLQKGIKSKIIESELQAINFQDLASKISQKLYKKYQNKLPLKALKDKLMQSLTTKGFDYQIAHTVIQNLEIEKDQELEEDLIYKELDKQYQKFSKKYDQYELKQRIINALMRKGYQYEDIKSALREYL.

This sequence belongs to the RecX family.

The protein localises to the cytoplasm. Functionally, modulates RecA activity. In Streptococcus agalactiae serotype Ia (strain ATCC 27591 / A909 / CDC SS700), this protein is Regulatory protein RecX.